We begin with the raw amino-acid sequence, 557 residues long: Probable asparagine synthetase [glutamine-hydrolyzing] (557 aa).

Cys-2 serves as the catalytic For GATase activity. Residues 2-188 (CGILAILNSL…PGHYFSSKTK (187 aa)) form the Glutamine amidotransferase type-2 domain. Residues 50–54 (RLAIV), 75–77 (NGE), and Asp-101 each bind L-glutamine. An Asparagine synthetase domain is found at 217-466 (AIKEAFEQAV…LPSSVLWRQK (250 aa)). ATP-binding positions include Leu-239, Ile-279, and 353–354 (SG). The disordered stretch occupies residues 538 to 557 (WGASQDPSGRAQKVHLSTTE).

It carries out the reaction L-aspartate + L-glutamine + ATP + H2O = L-asparagine + L-glutamate + AMP + diphosphate + H(+). It functions in the pathway amino-acid biosynthesis; L-asparagine biosynthesis; L-asparagine from L-aspartate (L-Gln route): step 1/1. This chain is Probable asparagine synthetase [glutamine-hydrolyzing] (asns), found in Dictyostelium discoideum (Social amoeba).